A 648-amino-acid chain; its full sequence is Probable potassium transport system protein Kup 1 (648 aa).

12 helical membrane-spanning segments follow: residues 25–45 (LTLG…IYAF), 57–77 (IVAG…ILVV), 113–133 (LVMA…VITP), 153–173 (SVSR…LFLM), 184–204 (LFGP…LIHI), 219–239 (GVLF…AVFL), 263–283 (WLAI…AFAL), 312–332 (IPLV…VITG), 362–382 (IYLP…VLGF), 391–411 (AYGV…FLVV), 417–437 (WGWP…LFFF), and 446–466 (EGGW…VTWV).

Belongs to the HAK/KUP transporter (TC 2.A.72) family.

Its subcellular location is the cell inner membrane. It catalyses the reaction K(+)(in) + H(+)(in) = K(+)(out) + H(+)(out). In terms of biological role, transport of potassium into the cell. Likely operates as a K(+):H(+) symporter. This is Probable potassium transport system protein Kup 1 from Rhizorhabdus wittichii (strain DSM 6014 / CCUG 31198 / JCM 15750 / NBRC 105917 / EY 4224 / RW1) (Sphingomonas wittichii).